The following is a 283-amino-acid chain: Pantothenate synthetase (283 aa).

Residue 30–37 participates in ATP binding; that stretch reads MGYLHDGH. Catalysis depends on His37, which acts as the Proton donor. Residue Gln61 participates in (R)-pantoate binding. Position 61 (Gln61) interacts with beta-alanine. Residue 147 to 150 participates in ATP binding; sequence GKKD. Gln153 lines the (R)-pantoate pocket. ATP-binding positions include Ile176 and 184–187; that span reads MSSR.

It belongs to the pantothenate synthetase family. As to quaternary structure, homodimer.

It is found in the cytoplasm. The enzyme catalyses (R)-pantoate + beta-alanine + ATP = (R)-pantothenate + AMP + diphosphate + H(+). The protein operates within cofactor biosynthesis; (R)-pantothenate biosynthesis; (R)-pantothenate from (R)-pantoate and beta-alanine: step 1/1. Catalyzes the condensation of pantoate with beta-alanine in an ATP-dependent reaction via a pantoyl-adenylate intermediate. This is Pantothenate synthetase from Geobacter sulfurreducens (strain ATCC 51573 / DSM 12127 / PCA).